Consider the following 108-residue polypeptide: Alkyltransferase-like protein 1 (108 aa).

It belongs to the MGMT family. ATL subfamily.

Its function is as follows. Involved in DNA damage recognition. Binds DNA containing O(6)-methylguanine and larger O(6)-alkylguanine adducts. The DNA is bent, the damaged base is rotated out of the DNA duplex into a hydrophobic binding pocket (nucleotide flipping), with Arg-39 donating a hydrogen bond to the orphaned cytosine to stabilize the extrahelical DNA conformation. This structural change in DNA presents the lesion to the nucleotide excision repair (NER) pathway. The affinity for O(6)-alkylguanine adducts increases with the size of the alkyl group. Low affinity small O(6)-alkylguanines are directed to the global genome repair pathway of NER via rhp7-rhp16 and rhp41-rhp23, while strong binding to bulky O(6)-alkylguanines stalls the transcription machinery and diverts the damage to the transcription-coupled repair pathway of NER via rhp26. This chain is Alkyltransferase-like protein 1, found in Schizosaccharomyces pombe (strain 972 / ATCC 24843) (Fission yeast).